The chain runs to 391 residues: Na(+)/H(+) antiporter NhaA 2 (391 aa).

11 helical membrane-spanning segments follow: residues 25 to 45 (AGGIVLMAAALAALIVANSPL), 56 to 76 (VWLGLSVELWINDGLMAIFFL), 98 to 118 (ALPGFAALGGMLVPALIYIAI), 128 to 148 (GWAIPAATDIAFALGVLSLLG), 157 to 177 (VFLAALAILDDLGAVTIIAFF), 180 to 200 (SGLNLPMLAAAFVTLAVLVAL), 208 to 228 (LLPYLLLGALLWFFVLQSGVH), 264 to 284 (VAFAVVPIFGFANAGVSLSGI), 297 to 317 (VALGLFVGKQIGVFLAAVLAI), 335 to 355 (GVAILCGIGFTMSLFIGNLAF), and 364 to 384 (EVKVGVLIGSGLAAVAGIVLL).

This sequence belongs to the NhaA Na(+)/H(+) (TC 2.A.33) antiporter family.

It is found in the cell inner membrane. It carries out the reaction Na(+)(in) + 2 H(+)(out) = Na(+)(out) + 2 H(+)(in). Functionally, na(+)/H(+) antiporter that extrudes sodium in exchange for external protons. This Pseudomonas syringae pv. tomato (strain ATCC BAA-871 / DC3000) protein is Na(+)/H(+) antiporter NhaA 2.